A 60-amino-acid polypeptide reads, in one-letter code: DNA gyrase inhibitor YacG (60 aa).

Zn(2+) contacts are provided by Cys15, Cys18, Cys30, and Cys34.

Belongs to the DNA gyrase inhibitor YacG family. Interacts with GyrB. Requires Zn(2+) as cofactor.

In terms of biological role, inhibits all the catalytic activities of DNA gyrase by preventing its interaction with DNA. Acts by binding directly to the C-terminal domain of GyrB, which probably disrupts DNA binding by the gyrase. The chain is DNA gyrase inhibitor YacG from Nitrobacter hamburgensis (strain DSM 10229 / NCIMB 13809 / X14).